Here is a 1032-residue protein sequence, read N- to C-terminus: MAFTNYSSLNRAQLTFEYLHTNSTTHEFLFGALAELVDNARDADATRIDIYAERREDLRGGFMLCFLDDGAGMDPSDAASVIQFGKSAKRTPESTQIGQYGNGLKSGSMRIGKDFILFTKKEDTMTCLFLSRTFHEEEGIDEVIVPLPTWNARTREPVTDNVEKFAIETELIYKYSPFRTEEEVMTQFMKIPGDSGTLVIIFNLKLMDNGEPELDIISNPRDIQMAETSPEGTKPERRSFRAYAAVLYIDPRMRIFIHGHKVQTKRLSCCLYKPRMYKYTSSRFKTRAEQEVKKAEHVARIAEEKAREAESKARTLEVRLGGDLTRDSRVMLRQVQNRAITLRREADVKKRIKEAKQRALKEPKELNFVFGVNIEHRDLDGMFIYNCSRLIKMYEKVGPQLEGGMACGGVVGVVDVPYLVLEPTHNKQDFADAKEYRHLLRAMGEHLAQYWKDIAIAQRGIIKFWDEFGYLSANWNQPPSSELRYKRRRAMEIPTTIQCDLCLKWRTLPFQLSSVEKDYPDTWVCSMNPDPEQDRCEASEQKQKVPLGTFRKDMKTQEEKQKQLTEKIRQQQEKLEALQKTTPIRSQADLKKLPLEVTTRPSTEEPVRRPQRPRSPPLPAVIRNAPSRPPSLPTPRPASQPRKAPVISSTPKLPALAAREEASTSRLLQPPEAPRKPANTLVKTASRPAPLVQQLSPSLLPNSKSPREVPSPKVIKTPVVKKTESPIKLSPATPSRKRSVAVSDEEEVEEEAERRKERCKRGRFVVKEEKKDSNELSDSAGEEDSADLKRAQKDKGLHVEVRVNREWYTGRVTAVEVGKHVVRWKVKFDYVPTDTTPRDRWVEKGSEDVRLMKPPSPEHQSLDTQQEGGEEEVGPVAQQAIAVAEPSTSECLRIEPDTTALSTNHETIDLLVQILRNCLRYFLPPSFPISKKQLSAMNSDELISFPLKEYFKQYEVGLQNLCNSYQSRADSRAKASEESLRTSERKLRETEEKLQKLRTNIVALLQKVQEDIDINTDDELDAYIEDLITKGD.

An N-acetylalanine modification is found at Ala2. ATP contacts are provided by residues Asn39, 87–89 (SAK), and 99–105 (QYGNGLK). Asn39 is a binding site for Mg(2+). Residues 282–362 (SRFKTRAEQE…KEAKQRALKE (81 aa)) are a coiled coil. Lys427 is an ATP binding site. The segment at 490–544 (AMEIPTTIQCDLCLKWRTLPFQLSSVEKDYPDTWVCSMNPDPEQDRCEASEQKQK) adopts a CW-type zinc-finger fold. Positions 499, 502, 525, and 536 each coordinate Zn(2+). Disordered stretches follow at residues 530 to 563 (DPEQ…KQKQ) and 577 to 793 (ALQK…RAQK). 2 stretches are compositionally biased toward basic and acidic residues: residues 532 to 543 (EQDRCEASEQKQ) and 550 to 563 (FRKD…KQKQ). A coiled-coil region spans residues 547 to 584 (LGTFRKDMKTQEEKQKQLTEKIRQQQEKLEALQKTTPI). A Phosphothreonine modification is found at Thr582. A phosphoserine mark is found at Ser602 and Ser615. Residues 627–638 (SRPPSLPTPRPA) are compositionally biased toward pro residues. Lys652 participates in a covalent cross-link: Glycyl lysine isopeptide (Lys-Gly) (interchain with G-Cter in SUMO2). Residues 690-704 (PLVQQLSPSLLPNSK) are compositionally biased toward low complexity. The residue at position 696 (Ser696) is a Phosphoserine. Lys704 is covalently cross-linked (Glycyl lysine isopeptide (Lys-Gly) (interchain with G-Cter in SUMO2)). Ser705 bears the Phosphoserine mark. Residues 711–720 (SPKVIKTPVV) are compositionally biased toward low complexity. A Glycyl lysine isopeptide (Lys-Gly) (interchain with G-Cter in SUMO2) cross-link involves residue Lys716. Phosphoserine occurs at positions 725 and 730. Thr733 is modified (phosphothreonine). Ser739 carries the phosphoserine; by PAK1 modification. Positions 741–761 (AVSDEEEVEEEAERRKERCKR) form a coiled coil. The residue at position 743 (Ser743) is a Phosphoserine. The span at 765-774 (VVKEEKKDSN) shows a compositional bias: basic and acidic residues. A Glycyl lysine isopeptide (Lys-Gly) (interchain with G-Cter in SUMO2) cross-link involves residue Lys767. A phosphoserine mark is found at Ser777 and Ser779. Lys819 participates in a covalent cross-link: Glycyl lysine isopeptide (Lys-Gly) (interchain with G-Cter in SUMO2). Positions 850–870 (RLMKPPSPEHQSLDTQQEGGE) are disordered. A Glycyl lysine isopeptide (Lys-Gly) (interchain with G-Cter in SUMO2) cross-link involves residue Lys932. Positions 966 to 1016 (QSRADSRAKASEESLRTSERKLRETEEKLQKLRTNIVALLQKVQEDIDINT) form a coiled coil.

As to quaternary structure, homodimerizes upon ATP-binding and dissociate upon ATP hydrolysis; homodimerization is required for gene silencing. Interacts with HDAC4. Interacts with ACLY. Interacts with TASOR and MPHOSPH8; the interactions associate MORC2 with the HUSH complex which recruits MORC2 to heterochromatic loci. Phosphorylated by PAK1 at Ser-739 upon DNA damage. Phosphorylation is required for ATPase activity and recruitment to damaged chromatin. Highly expressed in smooth muscle, pancreas and testis.

Its subcellular location is the nucleus. It is found in the cytoplasm. The protein localises to the cytosol. The protein resides in the chromosome. It localises to the nucleus matrix. The enzyme catalyses ATP + H2O = ADP + phosphate + H(+). ATPase activity is dependent of phosphorylation by PAK1 and presence of DNA. In terms of biological role, essential for epigenetic silencing by the HUSH (human silencing hub) complex. Recruited by HUSH to target site in heterochromatin, the ATPase activity and homodimerization are critical for HUSH-mediated silencing. Represses germ cell-related genes and L1 retrotransposons in collaboration with SETDB1 and the HUSH complex, the silencing is dependent of repressive epigenetic modifications, such as H3K9me3 mark. Silencing events often occur within introns of transcriptionally active genes, and lead to the down-regulation of host gene expression. During DNA damage response, regulates chromatin remodeling through ATP hydrolysis. Upon DNA damage, is phosphorylated by PAK1, both colocalize to chromatin and induce H2AX expression. ATPase activity is required and dependent of phosphorylation by PAK1 and presence of DNA. Recruits histone deacetylases, such as HDAC4, to promoter regions, causing local histone H3 deacetylation and transcriptional repression of genes such as CA9. Exhibits a cytosolic function in lipogenesis, adipogenic differentiation, and lipid homeostasis by increasing the activity of ACLY, possibly preventing its dephosphorylation. The polypeptide is ATPase MORC2 (Homo sapiens (Human)).